A 124-amino-acid polypeptide reads, in one-letter code: Small ribosomal subunit protein uS12 (124 aa).

The residue at position 89 (aspartate 89) is a 3-methylthioaspartic acid. The interval 105-124 is disordered; sequence QGVKNRKQARSRYGAKKEKS. Basic residues predominate over residues 108-118; the sequence is KNRKQARSRYG.

It belongs to the universal ribosomal protein uS12 family. In terms of assembly, part of the 30S ribosomal subunit. Contacts proteins S8 and S17. May interact with IF1 in the 30S initiation complex.

In terms of biological role, with S4 and S5 plays an important role in translational accuracy. Functionally, interacts with and stabilizes bases of the 16S rRNA that are involved in tRNA selection in the A site and with the mRNA backbone. Located at the interface of the 30S and 50S subunits, it traverses the body of the 30S subunit contacting proteins on the other side and probably holding the rRNA structure together. The combined cluster of proteins S8, S12 and S17 appears to hold together the shoulder and platform of the 30S subunit. This chain is Small ribosomal subunit protein uS12, found in Mycobacterium sp. (strain JLS).